The sequence spans 178 residues: Stathmin-2-A (178 aa).

Residues Asp38 to Gly178 form the SLD domain. Positions Lys75–Gly178 form a coiled coil.

It belongs to the stathmin family. Nervous tissue.

It localises to the cytoplasm. Its subcellular location is the membrane. The protein localises to the cell projection. The protein resides in the lamellipodium. This chain is Stathmin-2-A (stmn2-a), found in Xenopus laevis (African clawed frog).